We begin with the raw amino-acid sequence, 201 residues long: Large ribosomal subunit protein bL25 (201 aa).

Belongs to the bacterial ribosomal protein bL25 family. CTC subfamily. Part of the 50S ribosomal subunit; part of the 5S rRNA/L5/L18/L25 subcomplex. Contacts the 5S rRNA. Binds to the 5S rRNA independently of L5 and L18.

This is one of the proteins that binds to the 5S RNA in the ribosome where it forms part of the central protuberance. This chain is Large ribosomal subunit protein bL25, found in Burkholderia multivorans (strain ATCC 17616 / 249).